The following is a 330-amino-acid chain: ADP-L-glycero-D-manno-heptose-6-epimerase (330 aa).

NADP(+) contacts are provided by residues 11 to 12, 32 to 33, lysine 39, lysine 54, 75 to 79, and asparagine 92; these read FI, DN, and EGACS. Tyrosine 139 (proton acceptor) is an active-site residue. Residue lysine 143 participates in NADP(+) binding. Residue asparagine 168 participates in substrate binding. Residues valine 169 and lysine 177 each contribute to the NADP(+) site. Lysine 177 serves as the catalytic Proton acceptor. Residues arginine 179, histidine 186, 200–203, arginine 213, and tyrosine 292 contribute to the substrate site; that span reads FGEY.

The protein belongs to the NAD(P)-dependent epimerase/dehydratase family. HldD subfamily. In terms of assembly, homopentamer. The cofactor is NADP(+).

The enzyme catalyses ADP-D-glycero-beta-D-manno-heptose = ADP-L-glycero-beta-D-manno-heptose. It functions in the pathway nucleotide-sugar biosynthesis; ADP-L-glycero-beta-D-manno-heptose biosynthesis; ADP-L-glycero-beta-D-manno-heptose from D-glycero-beta-D-manno-heptose 7-phosphate: step 4/4. Catalyzes the interconversion between ADP-D-glycero-beta-D-manno-heptose and ADP-L-glycero-beta-D-manno-heptose via an epimerization at carbon 6 of the heptose. The chain is ADP-L-glycero-D-manno-heptose-6-epimerase from Burkholderia thailandensis (strain ATCC 700388 / DSM 13276 / CCUG 48851 / CIP 106301 / E264).